We begin with the raw amino-acid sequence, 279 residues long: HTH-type transcriptional activator RhaS (279 aa).

One can recognise an HTH araC/xylS-type domain in the interval 175-273 (QALLGWLQNN…SQAPKSLRHQ (99 aa)). DNA-binding regions (H-T-H motif) lie at residues 192 to 213 (GGLA…KQHT) and 240 to 263 (ITTI…RKAF).

As to quaternary structure, binds DNA as a dimer.

The protein localises to the cytoplasm. Activates expression of the rhaBAD and rhaT operons. This Pectobacterium atrosepticum (strain SCRI 1043 / ATCC BAA-672) (Erwinia carotovora subsp. atroseptica) protein is HTH-type transcriptional activator RhaS.